Reading from the N-terminus, the 831-residue chain is DNA polymerase I, thermostable (831 aa).

In terms of domain architecture, 5'-3' exonuclease spans 174–258 (RPEQWVDYRA…TDLPLEVDFG (85 aa)). A polymerase region spans residues 409-831 (ERLFQTLKER…LGEDWLSAKE (423 aa)).

This sequence belongs to the DNA polymerase type-A family.

The enzyme catalyses DNA(n) + a 2'-deoxyribonucleoside 5'-triphosphate = DNA(n+1) + diphosphate. In terms of biological role, in addition to polymerase activity, this DNA polymerase exhibits 5'-3' exonuclease activity. The sequence is that of DNA polymerase I, thermostable (polA) from Thermus thermophilus.